The primary structure comprises 273 residues: F-actin-capping protein subunit alpha (273 aa).

It belongs to the F-actin-capping protein alpha subunit family. In terms of assembly, heterodimer of an alpha and a beta subunit.

It is found in the cytoplasm. It localises to the cytoskeleton. In terms of biological role, F-actin-capping proteins bind in a Ca(2+)-independent manner to the fast growing ends of actin filaments (barbed end) thereby blocking the exchange of subunits at these ends. Unlike other capping proteins (such as gelsolin and severin), these proteins do not sever actin filaments. The chain is F-actin-capping protein subunit alpha (cap1) from Emericella nidulans (strain FGSC A4 / ATCC 38163 / CBS 112.46 / NRRL 194 / M139) (Aspergillus nidulans).